We begin with the raw amino-acid sequence, 362 residues long: DNA replication and repair protein RecF (362 aa).

31 to 38 contacts ATP; sequence GDNAAGKT.

The protein belongs to the RecF family.

The protein localises to the cytoplasm. Functionally, the RecF protein is involved in DNA metabolism; it is required for DNA replication and normal SOS inducibility. RecF binds preferentially to single-stranded, linear DNA. It also seems to bind ATP. In Hydrogenovibrio crunogenus (strain DSM 25203 / XCL-2) (Thiomicrospira crunogena), this protein is DNA replication and repair protein RecF.